Reading from the N-terminus, the 93-residue chain is YcgL domain-containing protein Swoo_2115 (93 aa).

In terms of domain architecture, YcgL spans 1-85 (MICAVYKSRR…PVVNLLEEHK (85 aa)).

In Shewanella woodyi (strain ATCC 51908 / MS32), this protein is YcgL domain-containing protein Swoo_2115.